A 359-amino-acid polypeptide reads, in one-letter code: MNVDDFDFELPDRLIARHPPAQRRDARLLALTCDALEHQQFPDLLSHVHPGDLLIFNDTRVIPARLFGQKESGGKVEVLIERVVDDHEALAHVRASKSPKPGSWLEFAKGIRAQVTGRRGALFILHFSLPGNGCDTLLSALELIGHVPLPPYIDRPDEDGDMERYQTVYAREPGAVAAPTAGLHFDDAMLAALEQRGVDIGFVTLHVGAGTFQPVRVDKVEDHHMHSERYQIPGSLVEQVAQAHARGGRVVAVGTTALRALEAASQSGGLHAGQGETDIFIFPGYRFRLVDALVTNFHLPKSTLLMLISAFAGRDRIMGAYRAAIEAQYRFFSYGDAMFIEGTQPASRNTQHVKSGADE.

Belongs to the QueA family. In terms of assembly, monomer.

The protein resides in the cytoplasm. The catalysed reaction is 7-aminomethyl-7-carbaguanosine(34) in tRNA + S-adenosyl-L-methionine = epoxyqueuosine(34) in tRNA + adenine + L-methionine + 2 H(+). It participates in tRNA modification; tRNA-queuosine biosynthesis. Functionally, transfers and isomerizes the ribose moiety from AdoMet to the 7-aminomethyl group of 7-deazaguanine (preQ1-tRNA) to give epoxyqueuosine (oQ-tRNA). This chain is S-adenosylmethionine:tRNA ribosyltransferase-isomerase, found in Alcanivorax borkumensis (strain ATCC 700651 / DSM 11573 / NCIMB 13689 / SK2).